A 374-amino-acid polypeptide reads, in one-letter code: Isocitrate dehydrogenase [NAD] catalytic subunit 6, mitochondrial (374 aa).

The transit peptide at 1–44 (MTMTAFLARRLIGNGSSQILGTSSSSSGPFISVSRAFFSSSTPI) directs the protein to the mitochondrion. Arginine 127, arginine 137, arginine 158, and aspartate 245 together coordinate substrate. Mg(2+)-binding residues include aspartate 245, aspartate 269, and aspartate 273.

Belongs to the isocitrate and isopropylmalate dehydrogenases family. Heterooligomer of catalytic and regulatory subunits. Requires Mg(2+) as cofactor. It depends on Mn(2+) as a cofactor. In terms of tissue distribution, ubiquitous. Predominantly expressed in leaves.

The protein resides in the mitochondrion. The enzyme catalyses D-threo-isocitrate + NAD(+) = 2-oxoglutarate + CO2 + NADH. Functionally, catalytic subunit of the NAD(+)-dependent isocitrate dehydrogenase involved in the oxidative decarboxylation of isocitrate to 2-oxoglutarate. Performs an essential role in the oxidative function of the citric acid cycle. The protein is Isocitrate dehydrogenase [NAD] catalytic subunit 6, mitochondrial (IDH6) of Arabidopsis thaliana (Mouse-ear cress).